A 219-amino-acid polypeptide reads, in one-letter code: Probable GTP-binding protein EngB (219 aa).

Residues 24–207 enclose the EngB-type G domain; the sequence is VQPEIAFAGR…HELIESWVRP (184 aa). GTP-binding positions include 32 to 39, 59 to 63, 81 to 84, 148 to 151, and 186 to 188; these read GRSNAGKS, GRTQH, DLPG, TKCD, and FSA. Ser-39 and Thr-61 together coordinate Mg(2+).

This sequence belongs to the TRAFAC class TrmE-Era-EngA-EngB-Septin-like GTPase superfamily. EngB GTPase family. Mg(2+) is required as a cofactor.

Functionally, necessary for normal cell division and for the maintenance of normal septation. This Burkholderia ambifaria (strain MC40-6) protein is Probable GTP-binding protein EngB.